The primary structure comprises 88 residues: Small ribosomal subunit protein uS15 (88 aa).

Belongs to the universal ribosomal protein uS15 family. As to quaternary structure, part of the 30S ribosomal subunit. Forms a bridge to the 50S subunit in the 70S ribosome, contacting the 23S rRNA.

In terms of biological role, one of the primary rRNA binding proteins, it binds directly to 16S rRNA where it helps nucleate assembly of the platform of the 30S subunit by binding and bridging several RNA helices of the 16S rRNA. Its function is as follows. Forms an intersubunit bridge (bridge B4) with the 23S rRNA of the 50S subunit in the ribosome. This is Small ribosomal subunit protein uS15 from Acidovorax sp. (strain JS42).